Reading from the N-terminus, the 297-residue chain is MKNILQGAMTALITPFKNGKLDEETFEKLIKRQIKNGIDVVVPVGTTGESATLTHNEHKICIEIAVNACKDTNVKVLAGAGSNATHEAIDFAKFAQSHGADGILSVAPYYNKPTQEGLYQHYKAIAESIDIPVLLYNVPGRVGVDILPSTVFRLFKECKNIFGIKEATGSIDRCVDLLAHEPNLVVISGEDAINYPILSNGGKGVISVTANLLPDYICELTHLALDEEYTKAKAINDKLYNINKILFCESNPIPIKAAMYIAGLIGNLEYRLPLCEPSSENFKKIEQTMKNYEIKGF.

Position 47 (Thr-47) interacts with pyruvate. Tyr-136 serves as the catalytic Proton donor/acceptor. Lys-165 functions as the Schiff-base intermediate with substrate in the catalytic mechanism. Pyruvate is bound at residue Ile-206.

It belongs to the DapA family. As to quaternary structure, homotetramer; dimer of dimers.

Its subcellular location is the cytoplasm. It catalyses the reaction L-aspartate 4-semialdehyde + pyruvate = (2S,4S)-4-hydroxy-2,3,4,5-tetrahydrodipicolinate + H2O + H(+). Its pathway is amino-acid biosynthesis; L-lysine biosynthesis via DAP pathway; (S)-tetrahydrodipicolinate from L-aspartate: step 3/4. Functionally, catalyzes the condensation of (S)-aspartate-beta-semialdehyde [(S)-ASA] and pyruvate to 4-hydroxy-tetrahydrodipicolinate (HTPA). In Campylobacter curvus (strain 525.92), this protein is 4-hydroxy-tetrahydrodipicolinate synthase.